A 551-amino-acid chain; its full sequence is Seventh homolog of septin 1 (551 aa).

S2 carries the post-translational modification N-acetylserine. In terms of domain architecture, Septin-type G spans 20-339 (RGITYTMLLC…ENYRSEKLSS (320 aa)). A G1 motif region spans residues 30–37 (GPAGTGKT). Residues 30–37 (GPAGTGKT), G138, 218–226 (RADSFTKEE), and R288 each bind GTP. The tract at residues 135-138 (MTHG) is G3 motif. Positions 217-220 (TRAD) are G4 motif. The disordered stretch occupies residues 381 to 417 (NLRADTPRNQVSGNFKENEYEDNGEHDSAENEQEMSP). The residue at position 400 (Y400) is a Phosphotyrosine. S408 and S416 each carry phosphoserine. Residues 418–518 (VRQLGREIKQ…KLINQNKLNG (101 aa)) are a coiled coil. Residues K426 and K437 each participate in a glycyl lysine isopeptide (Lys-Gly) (interchain with G-Cter in SUMO) cross-link. Phosphoserine is present on residues S447, S460, S519, S520, S522, and S525. The tract at residues 515–551 (KLNGSSSSINSLQQSTRSQIKKNDTYTDLASIASGRD) is disordered. Residues 519 to 532 (SSSSINSLQQSTRS) are compositionally biased toward low complexity. A Phosphothreonine modification is found at T539. Residues S545 and S548 each carry the phosphoserine modification.

This sequence belongs to the TRAFAC class TrmE-Era-EngA-EngB-Septin-like GTPase superfamily. Septin GTPase family. In terms of assembly, component of the septin complex which consists of CDC3, CDC10, CDC11, CDC12 and probably SHS1 and rearranges to a cortical collar of highly ordered filaments at the mother-bud-neck. A complex formed by CDC3, CDC10, CDC11 and CDC12 is capable of forming long filaments in vitro and the components seem to be present in a 2:2:2:2 arrangement in vivo. The filaments are proposed to be formed by the end-to-end polymerization of CDC3-CDC12-CDC11 complexes with CDC10 serving as a bridge to bundle the polymers into paired filaments. Component of the GIN4 complex composed of at least BNI5, CDC3, CDC10, CDC11, CDC12, GIN4, NAP1 and SHS1. Self-associates. Interacts with CDC11 and SPA2. Phosphorylated by GIN4 and CLA4. Phosphorylation state is essential for septin ring dynamics during telophase. Post-translationally, sumoylated during mitosis on the mother cell side of the bud neck. Sumoylation probably plays a central role in regulating septin ring disassembly during the cell cycle.

It localises to the membrane. The protein localises to the bud neck. Septins are GTPases involved in cytokinesis that assemble early in the cell cycle as a patch at the incipient bud site and form a ring approximately 15 minutes before bud emergence, which transforms into an hour-glass shaped collar of cortical filaments that spans both sides of the mother-bud neck. This collar persists until just before cytokinesis, when it splits into two rings that occupy opposite sides of the neck. The septins at the bud neck serve as a structural scaffold that recruits different components involved in diverse processes at specific stages during the cell cycle. Many proteins bind asymmetrically to the septin collar. The septin assembly is regulated by protein kinases GIN4 and/or CLA4. May act by recruiting MYO1 and HOF1, a protein involved in septation, to the site of cleavage. Septins are also involved in cell morphogenesis, bud site selection, chitin deposition, cell cycle regulation, cell compartmentalization and spore wall formation. CDCd11 with SHS1 11 are involved in the recruitment of BNI5 and thereby ensure efficient localization at the bud neck of MYO1, the type II myosin of the actomyosin contractile ring. In Saccharomyces cerevisiae (strain ATCC 204508 / S288c) (Baker's yeast), this protein is Seventh homolog of septin 1.